We begin with the raw amino-acid sequence, 78 residues long: ATP synthase subunit a (78 aa).

3 helical membrane passes run 13-33 (LFGNVYAKEMLMILLVGLGTS), 35-55 (FLGAFGAFLPLIVWQAFGMFI), and 57-77 (SLQAFIFAMLAMVYMAHKVEA).

This sequence belongs to the ATPase A chain family. As to quaternary structure, F-type ATPases have 2 components, CF(1) - the catalytic core - and CF(0) - the membrane proton channel. CF(1) has five subunits: alpha(3), beta(3), gamma(1), delta(1), epsilon(1). CF(0) has three main subunits: a(1), b(2) and c(9-12). The alpha and beta chains form an alternating ring which encloses part of the gamma chain. CF(1) is attached to CF(0) by a central stalk formed by the gamma and epsilon chains, while a peripheral stalk is formed by the delta and b chains.

The protein localises to the cell membrane. Its function is as follows. Key component of the proton channel; it plays a direct role in the translocation of protons across the membrane. The chain is ATP synthase subunit a (atpB) from Alkalihalobacillus alcalophilus (Bacillus alcalophilus).